The following is a 589-amino-acid chain: Complement component C8 beta chain (589 aa).

Residues 1 to 31 (MKTGAQVWRALAKSCLLCAALGCLHLPGARG) form the signal peptide. Residues 32 to 53 (EKPDFFETNAVNGSLVRSRPVR) constitute a propeptide that is removed on maturation. An N-linked (GlcNAc...) asparagine glycan is attached at N43. One can recognise a TSP type-1 1 domain in the interval 63 to 116 (DCQLSTWSSWTACDPCQKKRYRHTYLLRPSQFYGELCDFSDKEVEDCVTNRACR). 7 cysteine pairs are disulfide-bonded: C64-C99, C75-C109, C78-C115, C121-C132, C126-C145, C139-C154, and C161-C199. 2 C-linked (Man) tryptophan glycosylation sites follow: W69 and W72. The LDL-receptor class A domain maps to 120 to 155 (RCEGFVCAQTGRCVNRRLLCNGDNDCGDQSDEANCR). Ca(2+)-binding residues include L137, N140, D142, D144, D150, and E151. The MACPF domain maps to 157-503 (IYKKCSQDME…EFQMEVSSCR (347 aa)). N242 is a glycosylation site (N-linked (GlcNAc...) asparagine). Transmembrane regions (beta stranded) follow at residues 251–258 (SSFKFGFK), 261–268 (GLVEFGVR), 378–385 (AGGGFQIG), and 391–398 (VYLKLGVS). Cysteines 377 and 402 form a disulfide. A Phosphothreonine modification is found at T417. Intrachain disulfides connect C502–C549, C504–C520, C507–C522, and C524–C533. Positions 504–534 (CAPCRNNGVPILKESRCECICPAGFQGVACE) constitute an EGF-like domain. One can recognise a TSP type-1 2 domain in the interval 544–587 (DGKWSCWSDWSPCSGGRKTRQRQCNNPAPQRGGSPCSGPASETL). W550 and W553 each carry a C-linked (Man) tryptophan glycan. An intrachain disulfide couples C556 to C589. The tract at residues 556–589 (CSGGRKTRQRQCNNPAPQRGGSPCSGPASETLDC) is disordered.

This sequence belongs to the complement C6/C7/C8/C9 family. Heterotrimer of 3 chains: alpha (C8A), beta (C8B) and gamma (C8G); the alpha and gamma chains are disulfide bonded. Component of the membrane attack complex (MAC), composed of complement C5b, C6, C7, C8A, C8B, C8G and multiple copies of the pore-forming subunit C9. Post-translationally, N-glycosylated; contains one or two bound glycans. Not O-glycosylated.

The protein localises to the secreted. It is found in the target cell membrane. Membrane attack complex (MAC) assembly is inhibited by CD59, thereby protecting self-cells from damage during complement activation. CD59 acts by binding to the beta-haipins of C8 (C8A and C8B), forming an intermolecular beta-sheet that prevents incorporation of the multiple copies of C9 required for complete formation of the osmolytic pore. MAC assembly is also inhibited by clusterin (CLU) chaperones that inhibit polymerization of C9. Its function is as follows. Component of the membrane attack complex (MAC), a multiprotein complex activated by the complement cascade, which inserts into a target cell membrane and forms a pore, leading to target cell membrane rupture and cell lysis. The MAC is initiated by proteolytic cleavage of C5 into complement C5b in response to the classical, alternative, lectin and GZMK complement pathways. The complement pathways consist in a cascade of proteins that leads to phagocytosis and breakdown of pathogens and signaling that strengthens the adaptive immune system. C8B, together with C8A and C8G, inserts into the target membrane, but does not form pores by itself. During MAC assembly, associates with C5b, C6 and C7 to form the C5b8 intermediate complex that inserts into the target membrane and traverses the bilayer increasing membrane rigidity. The protein is Complement component C8 beta chain (C8b) of Rattus norvegicus (Rat).